We begin with the raw amino-acid sequence, 298 residues long: Ribosomal protein L11 methyltransferase (298 aa).

4 residues coordinate S-adenosyl-L-methionine: Thr152, Gly173, Asp195, and Asn234.

This sequence belongs to the methyltransferase superfamily. PrmA family.

It localises to the cytoplasm. The catalysed reaction is L-lysyl-[protein] + 3 S-adenosyl-L-methionine = N(6),N(6),N(6)-trimethyl-L-lysyl-[protein] + 3 S-adenosyl-L-homocysteine + 3 H(+). Its function is as follows. Methylates ribosomal protein L11. This is Ribosomal protein L11 methyltransferase from Ralstonia nicotianae (strain ATCC BAA-1114 / GMI1000) (Ralstonia solanacearum).